The sequence spans 175 residues: Cytochrome c-type biogenesis protein CcmE (175 aa).

The Cytoplasmic segment spans residues 1–8; sequence MNAVRRKK. A helical; Signal-anchor for type II membrane protein membrane pass occupies residues 9 to 29; sequence LIWVAATLAGAIIAVLLVIYA. The Periplasmic segment spans residues 30-175; that stretch reads IGQQTDYYFD…GNHTTSTLQE (146 aa). Residues histidine 124 and tyrosine 128 each contribute to the heme site. A disordered region spans residues 142–175; the sequence is AAKGVTPTSEQFSPAIPVKQTAGEGNHTTSTLQE.

The protein belongs to the CcmE/CycJ family.

Its subcellular location is the cell inner membrane. Its function is as follows. Heme chaperone required for the biogenesis of c-type cytochromes. Transiently binds heme delivered by CcmC and transfers the heme to apo-cytochromes in a process facilitated by CcmF and CcmH. The chain is Cytochrome c-type biogenesis protein CcmE from Psychrobacter sp. (strain PRwf-1).